Here is a 213-residue protein sequence, read N- to C-terminus: ABA-inducible protein PHV A1 (213 aa).

Disordered stretches follow at residues methionine 1–threonine 158 and asparagine 182–histidine 213. Residues glycine 13 to threonine 23 show a composition bias toward basic and acidic residues. LEA 11-mer repeat repeat units follow at residues methionine 27 to threonine 37, threonine 38 to threonine 48, alanine 49 to threonine 59, alanine 60 to alanine 70, alanine 78 to threonine 88, alanine 89 to glycine 99, threonine 111 to threonine 121, threonine 122 to alanine 132, and threonine 133 to threonine 143. The segment at methionine 27–threonine 143 is 11 X 11 AA tandem repeats of T-E-A-A-K-Q-K-A-A-E-T. Basic and acidic residues-rich tracts occupy residues threonine 41–threonine 74, alanine 81–glutamine 98, and glutamate 109–alanine 140. Residues alanine 193–histidine 213 show a composition bias toward low complexity.

The protein belongs to the LEA type 4 family.

The chain is ABA-inducible protein PHV A1 (HVA1) from Hordeum vulgare (Barley).